The chain runs to 176 residues: Dual-action ribosomal maturation protein DarP (176 aa).

The span at 1-16 (MRLIDPDADLEFDPDS) shows a compositional bias: acidic residues. Positions 1-29 (MRLIDPDADLEFDPDSVYDGPSKSQKKRE) are disordered.

The protein belongs to the DarP family.

Its subcellular location is the cytoplasm. In terms of biological role, member of a network of 50S ribosomal subunit biogenesis factors which assembles along the 30S-50S interface, preventing incorrect 23S rRNA structures from forming. Promotes peptidyl transferase center (PTC) maturation. The protein is Dual-action ribosomal maturation protein DarP of Thiobacillus denitrificans (strain ATCC 25259 / T1).